The chain runs to 160 residues: Small ribosomal subunit protein uS7 (160 aa).

It belongs to the universal ribosomal protein uS7 family. Part of the 30S ribosomal subunit. Contacts proteins S9 and S11.

Its function is as follows. One of the primary rRNA binding proteins, it binds directly to 16S rRNA where it nucleates assembly of the head domain of the 30S subunit. Is located at the subunit interface close to the decoding center, probably blocks exit of the E-site tRNA. This Rickettsia prowazekii (strain Madrid E) protein is Small ribosomal subunit protein uS7.